The following is a 159-amino-acid chain: Cytochrome c-type biogenesis protein CcmE (159 aa).

Residues 1 to 8 lie on the Cytoplasmic side of the membrane; that stretch reads MNIRRKNR. The chain crosses the membrane as a helical; Signal-anchor for type II membrane protein span at residues 9–29; that stretch reads LWIACAVLAGLALTITLVLYA. Residues 30–159 are Periplasmic-facing; sequence LRSNIDLFYT…PESVYKDKAS (130 aa). Residues His130 and Tyr134 each coordinate heme. The tract at residues 130–159 is disordered; it reads HDENYTPPEVEKAMQENHRRPESVYKDKAS.

This sequence belongs to the CcmE/CycJ family.

Its subcellular location is the cell inner membrane. Its function is as follows. Heme chaperone required for the biogenesis of c-type cytochromes. Transiently binds heme delivered by CcmC and transfers the heme to apo-cytochromes in a process facilitated by CcmF and CcmH. The polypeptide is Cytochrome c-type biogenesis protein CcmE (Citrobacter koseri (strain ATCC BAA-895 / CDC 4225-83 / SGSC4696)).